The primary structure comprises 298 residues: Glycine--tRNA ligase alpha subunit (298 aa).

The protein belongs to the class-II aminoacyl-tRNA synthetase family. Tetramer of two alpha and two beta subunits.

It localises to the cytoplasm. The catalysed reaction is tRNA(Gly) + glycine + ATP = glycyl-tRNA(Gly) + AMP + diphosphate. The protein is Glycine--tRNA ligase alpha subunit of Helicobacter pylori (strain G27).